The chain runs to 173 residues: NADH-ubiquinone oxidoreductase chain 6 (173 aa).

A run of 6 helical transmembrane segments spans residues 1-21, 27-47, 48-68, 85-105, 106-126, and 139-159; these read MTYFVLFLGLCFVLGGLAVAS, YGVVGLVLASVAGCGWLLSLG, VSFVSLVLFMVYLGGMLVVFV, WGVVGYGVGFVVVLVAGLIVG, GSIGSLDFGVVTVDSVGMFSV, and CGVGMLLVAGWGLLLTLFVVL.

Belongs to the complex I subunit 6 family.

The protein localises to the mitochondrion membrane. It carries out the reaction a ubiquinone + NADH + 5 H(+)(in) = a ubiquinol + NAD(+) + 4 H(+)(out). Its function is as follows. Core subunit of the mitochondrial membrane respiratory chain NADH dehydrogenase (Complex I) that is believed to belong to the minimal assembly required for catalysis. Complex I functions in the transfer of electrons from NADH to the respiratory chain. The immediate electron acceptor for the enzyme is believed to be ubiquinone. The chain is NADH-ubiquinone oxidoreductase chain 6 (MT-ND6) from Aethia psittacula (Parakeet auklet).